The primary structure comprises 720 residues: DNA replication licensing factor mcm7-A (720 aa).

The C4-type zinc finger occupies 183–210; sequence CDQCGAETYQPIQSPTFMPLIMCPSREC. Positions 331–537 constitute an MCM domain; it reads FYEKLAASIA…NDLRLAQHIT (207 aa). The ATP site is built by Tyr-344, Gly-383, Ala-385, Lys-386, Ser-387, Asn-488, Arg-513, and Arg-603. The Arginine finger signature appears at 512–515; it reads SRFD.

This sequence belongs to the MCM family. Component of the mcm2-7 complex (RLF-M). The complex forms a toroidal hexameric ring with the proposed subunit order mcm2-mcm6-mcm4-mcm7-mcm3-mcm5. The heterodimer of mmcm3/mcm5 interacts with mcm4, mmcm6, mcm7 and weakly with mcm2. The N-terminus is required for interaction with mmcm3, though this interaction may not be direct, and remains in a complex with mmcm3 throughout the cell cycle. Begins to associate with zmcm6 at the neurula stage. Component of the replisome complex. Component of the CMG helicase complex, composed of the mcm2-7 complex, the GINS complex and cdc45. In terms of processing, ubiquitinated by traip when forks converge following formation of DNA interstrand cross-links. Ubiquitinated via 'Lys-6'- and 'Lys-63'-linked polyubiquitination by traip. Short ubiquitin chains on mcm7 promote recruitment of DNA glycosylase neil3. If the interstrand cross-link cannot be cleaved by neil3, the ubiquitin chains continue to grow on mcm7, promoting the unloading of the CMG helicase complex by the vcp/p97 ATPase.

It is found in the nucleus. It localises to the chromosome. It carries out the reaction ATP + H2O = ADP + phosphate + H(+). Functionally, acts as a component of the mcm2-7 complex (mcm complex) which is the putative replicative helicase essential for 'once per cell cycle' DNA replication initiation and elongation in eukaryotic cells. The active ATPase sites in the mcm2-7 ring are formed through the interaction surfaces of two neighboring subunits such that a critical structure of a conserved arginine finger motif is provided in trans relative to the ATP-binding site of the Walker A box of the adjacent subunit. The six ATPase active sites, however, are likely to contribute differentially to the complex helicase activity. The existence of maternal and zygotic forms of mcm3 and mcm6 suggests that specific forms of mcm2-7 complexes may be used during different stages of development. The polypeptide is DNA replication licensing factor mcm7-A (mcm7-a) (Xenopus laevis (African clawed frog)).